Consider the following 162-residue polypeptide: Large ribosomal subunit protein uL10 (162 aa).

It belongs to the universal ribosomal protein uL10 family. In terms of assembly, part of the ribosomal stalk of the 50S ribosomal subunit. The N-terminus interacts with L11 and the large rRNA to form the base of the stalk. The C-terminus forms an elongated spine to which L12 dimers bind in a sequential fashion forming a multimeric L10(L12)X complex.

Forms part of the ribosomal stalk, playing a central role in the interaction of the ribosome with GTP-bound translation factors. The protein is Large ribosomal subunit protein uL10 of Borrelia duttonii (strain Ly).